A 196-amino-acid polypeptide reads, in one-letter code: MNTGNRIGIFGGSFDPVHTGHVLVSVYTLEILDLDRLIVVPVFNPPHKKTVAPFEKRFEWLKKVFEGMEKVEVSDYEKGRGGVSYSIFTIEYFSEIYKTKPFFIVGEDALSYFEKWYRYRDILEKSTLVVYPRYCGKPYHEHARRVLGDLSEIVFLDMPIVQISSTEIRERARIGKTLKGFVPEEIREEVEVFYGA.

It belongs to the NadD family.

It carries out the reaction nicotinate beta-D-ribonucleotide + ATP + H(+) = deamido-NAD(+) + diphosphate. It participates in cofactor biosynthesis; NAD(+) biosynthesis; deamido-NAD(+) from nicotinate D-ribonucleotide: step 1/1. In terms of biological role, catalyzes the reversible adenylation of nicotinate mononucleotide (NaMN) to nicotinic acid adenine dinucleotide (NaAD). In Thermotoga sp. (strain RQ2), this protein is Probable nicotinate-nucleotide adenylyltransferase.